The sequence spans 614 residues: UvrABC system protein C (614 aa).

In terms of domain architecture, GIY-YIG spans 25-103 (SVPGVYKMFG…IKSLKPKYNI (79 aa)). In terms of domain architecture, UVR spans 214–249 (KEIQCELFEMMCRFSNNQDYESAIVCRDRLHALKSM).

The protein belongs to the UvrC family. Interacts with UvrB in an incision complex.

It is found in the cytoplasm. The UvrABC repair system catalyzes the recognition and processing of DNA lesions. UvrC both incises the 5' and 3' sides of the lesion. The N-terminal half is responsible for the 3' incision and the C-terminal half is responsible for the 5' incision. The polypeptide is UvrABC system protein C (Anaplasma phagocytophilum (strain HZ)).